A 196-amino-acid polypeptide reads, in one-letter code: Ribosome maturation factor RimP (196 aa).

A disordered region spans residues 164–196; the sequence is LAPQKPNKPGPKKPGHDKKKPSNEPAAGKPRAE. The segment covering 173–182 has biased composition (basic residues); sequence GPKKPGHDKK.

Belongs to the RimP family.

It is found in the cytoplasm. Functionally, required for maturation of 30S ribosomal subunits. The polypeptide is Ribosome maturation factor RimP (Xanthomonas campestris pv. campestris (strain 8004)).